Consider the following 76-residue polypeptide: DNA-directed RNA polymerase subunit Rpo5 (76 aa).

It belongs to the archaeal Rpo5/eukaryotic RPB5 RNA polymerase subunit family. As to quaternary structure, part of the RNA polymerase complex.

The protein resides in the cytoplasm. The enzyme catalyses RNA(n) + a ribonucleoside 5'-triphosphate = RNA(n+1) + diphosphate. Its function is as follows. DNA-dependent RNA polymerase (RNAP) catalyzes the transcription of DNA into RNA using the four ribonucleoside triphosphates as substrates. This is DNA-directed RNA polymerase subunit Rpo5 from Archaeoglobus fulgidus (strain ATCC 49558 / DSM 4304 / JCM 9628 / NBRC 100126 / VC-16).